Consider the following 459-residue polypeptide: Probable cysteine protease ATG4 (459 aa).

Positions 77-90 (LPTTPSTTTLPYPL) are enriched in low complexity. The disordered stretch occupies residues 77-104 (LPTTPSTTTLPYPLKAVPTTPPESSSSS). Cys178 serves as the catalytic Nucleophile. Active-site residues include Asp359 and His361.

The protein belongs to the peptidase C54 family.

It is found in the cytoplasm. It localises to the nucleus. Its subcellular location is the preautophagosomal structure. It carries out the reaction [protein]-C-terminal L-amino acid-glycyl-phosphatidylethanolamide + H2O = [protein]-C-terminal L-amino acid-glycine + a 1,2-diacyl-sn-glycero-3-phosphoethanolamine. In terms of biological role, cysteine protease that plays a key role in cytoplasm to vacuole transport (Cvt) and autophagy by mediating both proteolytic activation and delipidation of ATG8. Required for selective autophagic degradation of the nucleus (nucleophagy) as well as for mitophagy which contributes to regulate mitochondrial quantity and quality by eliminating the mitochondria to a basal level to fulfill cellular energy requirements and preventing excess ROS production. The protease activity is required for proteolytic activation of ATG8: cleaves the C-terminal amino acid of ATG8 to reveal a C-terminal glycine. ATG8 ubiquitin-like activity requires the exposure of the glycine at the C-terminus for its conjugation to phosphatidylethanolamine (PE) and its insertion to membranes, which is necessary for autophagy. The ATG8-PE conjugate mediates tethering between adjacent membranes and stimulates membrane hemifusion, leading to expansion of the autophagosomal membrane during autophagy. In addition to the protease activity, also catalyzes deconjugation of PE-conjugated forms of ATG8 during macroautophagy: ATG8 delipidation is required to release the protein from membranes, which facilitates multiple events during macroautophagy, and especially for efficient autophagosome biogenesis, the assembly of ATG9-containing tubulovesicular clusters into phagophores/autophagosomes, and for the disassembly of PAS-associated ATG components. ATG8 delipidation by ATG4 also recycles ATG8-PE generated on inappropriate membranes to maintain a reservoir of unlipidated ATG8 that is required for autophagosome formation at the PAS. The chain is Probable cysteine protease ATG4 (ATG4) from Cryphonectria parasitica (Chestnut blight fungus).